Reading from the N-terminus, the 373-residue chain is Queuine tRNA-ribosyltransferase (373 aa).

Catalysis depends on aspartate 90, which acts as the Proton acceptor. Substrate contacts are provided by residues 90-94 (DSGGF), aspartate 144, glutamine 193, and glycine 220. The tract at residues 251–257 (GVGTPED) is RNA binding. Catalysis depends on aspartate 270, which acts as the Nucleophile. The tract at residues 275-279 (TRNAR) is RNA binding; important for wobble base 34 recognition. Zn(2+)-binding residues include cysteine 308, cysteine 310, cysteine 313, and histidine 339.

It belongs to the queuine tRNA-ribosyltransferase family. In terms of assembly, homodimer. Within each dimer, one monomer is responsible for RNA recognition and catalysis, while the other monomer binds to the replacement base PreQ1. Zn(2+) is required as a cofactor.

It carries out the reaction 7-aminomethyl-7-carbaguanine + guanosine(34) in tRNA = 7-aminomethyl-7-carbaguanosine(34) in tRNA + guanine. It participates in tRNA modification; tRNA-queuosine biosynthesis. Its function is as follows. Catalyzes the base-exchange of a guanine (G) residue with the queuine precursor 7-aminomethyl-7-deazaguanine (PreQ1) at position 34 (anticodon wobble position) in tRNAs with GU(N) anticodons (tRNA-Asp, -Asn, -His and -Tyr). Catalysis occurs through a double-displacement mechanism. The nucleophile active site attacks the C1' of nucleotide 34 to detach the guanine base from the RNA, forming a covalent enzyme-RNA intermediate. The proton acceptor active site deprotonates the incoming PreQ1, allowing a nucleophilic attack on the C1' of the ribose to form the product. After dissociation, two additional enzymatic reactions on the tRNA convert PreQ1 to queuine (Q), resulting in the hypermodified nucleoside queuosine (7-(((4,5-cis-dihydroxy-2-cyclopenten-1-yl)amino)methyl)-7-deazaguanosine). This is Queuine tRNA-ribosyltransferase from Campylobacter lari (strain RM2100 / D67 / ATCC BAA-1060).